We begin with the raw amino-acid sequence, 531 residues long: Membrane protein insertase YidC (531 aa).

Transmembrane regions (helical) follow at residues 5–25 (ALIA…LFSP), 343–363 (GNYG…FYPL), 415–435 (LPML…MFSI), and 489–509 (PVVF…YWLV).

The protein belongs to the OXA1/ALB3/YidC family. Type 1 subfamily. Interacts with the Sec translocase complex via SecD. Specifically interacts with transmembrane segments of nascent integral membrane proteins during membrane integration.

It is found in the cell inner membrane. Functionally, required for the insertion and/or proper folding and/or complex formation of integral membrane proteins into the membrane. Involved in integration of membrane proteins that insert both dependently and independently of the Sec translocase complex, as well as at least some lipoproteins. Aids folding of multispanning membrane proteins. The protein is Membrane protein insertase YidC of Geobacter sulfurreducens (strain ATCC 51573 / DSM 12127 / PCA).